A 109-amino-acid polypeptide reads, in one-letter code: Putative transporter-like protein YIL171W (109 aa).

A compositionally biased stretch (polar residues) spans 1–22 (MSGVNNTSANDLSTTESNSNSA). The tract at residues 1-40 (MSGVNNTSANDLSTTESNSNSAVGAPSVKTEHGDSKDSLN) is disordered. Over 1–56 (MSGVNNTSANDLSTTESNSNSAVGAPSVKTEHGDSKDSLNLDATEAPIDLPQKPLS) the chain is Cytoplasmic. The segment covering 29 to 39 (KTEHGDSKDSL) has biased composition (basic and acidic residues). Residues 57–77 (AYTTVAILCLMIAFGGFIFGW) form a helical membrane-spanning segment. Residues 78–109 (DTGTISGFVNLSDFIRRFGQKKTTRGLTTYRK) are Extracellular-facing. The N-linked (GlcNAc...) asparagine glycan is linked to Asn-87.

It belongs to the major facilitator superfamily. Sugar transporter (TC 2.A.1.1) family.

The protein resides in the cell membrane. In terms of biological role, probable glucose transporter. This Saccharomyces cerevisiae (strain ATCC 204508 / S288c) (Baker's yeast) protein is Putative transporter-like protein YIL171W.